Reading from the N-terminus, the 253-residue chain is Probable transcriptional regulatory protein RPR_05505 (253 aa).

This sequence belongs to the TACO1 family.

It localises to the cytoplasm. The protein is Probable transcriptional regulatory protein RPR_05505 of Rickettsia peacockii (strain Rustic).